The primary structure comprises 105 residues: MYKFIFIFFTVFFLINIIEESXTXKVEDLPLPKSYTNALQQHLEKDKKRPDLQELTKKNFKTNRKSCMTNCSHVEGCFLLSPECCPKMTPTCLELDIVKEHLKKN.

Residues Met1–Thr23 form the signal peptide.

The protein belongs to the scoloptoxin-10 family. In terms of processing, contains 3 disulfide bonds. Expressed by the venom gland.

The protein resides in the secreted. This chain is U-scoloptoxin(10)-Sm3a, found in Scolopendra morsitans (Tanzanian blue ringleg centipede).